A 98-amino-acid polypeptide reads, in one-letter code: NADH-ubiquinone oxidoreductase chain 4L (98 aa).

3 consecutive transmembrane segments (helical) span residues 2 to 22 (PSIF…TLVF), 29 to 49 (SLLC…LIIL), and 61 to 81 (ILLL…LVMV).

It belongs to the complex I subunit 4L family. Core subunit of respiratory chain NADH dehydrogenase (Complex I) which is composed of 45 different subunits.

It localises to the mitochondrion inner membrane. The enzyme catalyses a ubiquinone + NADH + 5 H(+)(in) = a ubiquinol + NAD(+) + 4 H(+)(out). In terms of biological role, core subunit of the mitochondrial membrane respiratory chain NADH dehydrogenase (Complex I) which catalyzes electron transfer from NADH through the respiratory chain, using ubiquinone as an electron acceptor. Part of the enzyme membrane arm which is embedded in the lipid bilayer and involved in proton translocation. This chain is NADH-ubiquinone oxidoreductase chain 4L (MT-ND4L), found in Avahi laniger (Eastern woolly lemur).